A 292-amino-acid chain; its full sequence is Homoserine kinase (292 aa).

81 to 91 (RPRSGLGSSGA) provides a ligand contact to ATP.

It belongs to the GHMP kinase family. Homoserine kinase subfamily.

The protein resides in the cytoplasm. The enzyme catalyses L-homoserine + ATP = O-phospho-L-homoserine + ADP + H(+). It functions in the pathway amino-acid biosynthesis; L-threonine biosynthesis; L-threonine from L-aspartate: step 4/5. Functionally, catalyzes the ATP-dependent phosphorylation of L-homoserine to L-homoserine phosphate. The protein is Homoserine kinase of Thermococcus kodakarensis (strain ATCC BAA-918 / JCM 12380 / KOD1) (Pyrococcus kodakaraensis (strain KOD1)).